A 188-amino-acid chain; its full sequence is Threonylcarbamoyl-AMP synthase (188 aa).

The YrdC-like domain maps to glutamine 3 to glutamine 188.

It belongs to the SUA5 family. TsaC subfamily.

Its subcellular location is the cytoplasm. The catalysed reaction is L-threonine + hydrogencarbonate + ATP = L-threonylcarbamoyladenylate + diphosphate + H2O. In terms of biological role, required for the formation of a threonylcarbamoyl group on adenosine at position 37 (t(6)A37) in tRNAs that read codons beginning with adenine. Catalyzes the conversion of L-threonine, HCO(3)(-)/CO(2) and ATP to give threonylcarbamoyl-AMP (TC-AMP) as the acyladenylate intermediate, with the release of diphosphate. This Shewanella sp. (strain ANA-3) protein is Threonylcarbamoyl-AMP synthase.